The primary structure comprises 558 residues: MPWRRRRNRVSALEGGREEEAPPEAAAVPPALLTSPQQTEAAAERILLRGIFEIGRDSCDVVLSERALRWRPIQPERPAGDSKYDLLCKEEFIELKDIFSVKLKRRCSVKQQRSGTLLGITLFICLKKEQNKLKNSTLDLINLSEDHCDIWFRQFKKILAGFPNRPKSLKILLNPQSHKKEATQVYYEKVEPLLKLAGIKTDVTIMEYEGHALSLLKECELQGFDGGHRKPLFAIHWSVQRLFTGMQTLEPSVVCVGGDGSASEVAHALLLRAQKNAGMETDRILTPVRAQLPLGLIPAGSTNVLAHSLHGVPHVITATLHIIMGHVQLVDVCTFSTAGKLLRFGFSAMFGFGGRTLALAEKYRWMSPNQRRDFAVVKALAKLKAEDCEISFLPFNSSDDVQERRAQGSPKSDCNDQWQMIQGQFLNVSIMAIPCLCSVAPRGLAPNTRLNNGSMALIIARNTSRPEFIKHLKRYASVKNQFNFPFVETYTVEEVKVHPRNNTGGYNPEEEEDETASENCFPWNVDGDLMEVASEVHIRLHPRLISLYGGSMEEMIPK.

The interval 1-36 (MPWRRRRNRVSALEGGREEEAPPEAAAVPPALLTSP) is disordered. 2 short sequence motifs (nuclear localization signal) span residues 2–9 (PWRRRRNR) and 102–106 (KLKRR). The DAGKc domain occupies 164–339 (NRPKSLKILL…VDVCTFSTAG (176 aa)).

Phosphorylated on serine residues. In terms of tissue distribution, isoform 1 and isoform 2 are expressed in adult retina, liver and pancreas as well as in fetal brain, lung and kidney. Isoform 3 is expressed in adult retina as well as in fetal lung and liver. Isoform 4 is expressed in adult retina, lung and kidney as well as in fetal lung and liver. Moderately expressed in retina, kidney, lung, testis, trachea, and pancreas. Weakly expressed in brain, placenta and liver.

The protein localises to the cytoplasm. The protein resides in the nucleus. Its subcellular location is the nucleolus. It localises to the golgi apparatus. It is found in the trans-Golgi network. The protein localises to the endoplasmic reticulum. Its function is as follows. Has no detectable ceramide-kinase activity. Overexpression of CERKL protects cells from apoptosis in oxidative stress conditions. The protein is Ceramide kinase-like protein (CERKL) of Homo sapiens (Human).